A 300-amino-acid polypeptide reads, in one-letter code: MLIHPQFDPVALHLGPLAIRWYGLMYLAAFIMFLWFGRLRTRQPHIAAEGWTGRDLDDMLFYGVLGVILGGRLGYVLFYKPDWYFAHPLDIFKVWEGGMAFHGGFLGVVVAMMLYARMRGRSWMQVTDFIAPMVPCGLAAGRLGNFINGELWGRVSSPNLPWSMMFPQAQGEDREWLLSHAQEAVTSGLQAVFDQYHMLPRHPSQIYQFLGEGVLFFILLWLYARKPRPMGAVSGAFLLGYGVFRFAAEFAREPDNFLGLLAANLSMGQWLSLPMILIGIAMLVWSYRRAGNGEKNQAHA.

Helical transmembrane passes span 17–37 (LAIR…LWFG), 59–79 (MLFY…VLFY), 94–114 (VWEG…AMML), 129–149 (FIAP…FING), 204–224 (SQIY…WLYA), 230–250 (MGAV…AAEF), and 265–285 (LSMG…MLVW). Arg142 is a binding site for a 1,2-diacyl-sn-glycero-3-phospho-(1'-sn-glycerol).

It belongs to the Lgt family.

It localises to the cell inner membrane. It carries out the reaction L-cysteinyl-[prolipoprotein] + a 1,2-diacyl-sn-glycero-3-phospho-(1'-sn-glycerol) = an S-1,2-diacyl-sn-glyceryl-L-cysteinyl-[prolipoprotein] + sn-glycerol 1-phosphate + H(+). The protein operates within protein modification; lipoprotein biosynthesis (diacylglyceryl transfer). Functionally, catalyzes the transfer of the diacylglyceryl group from phosphatidylglycerol to the sulfhydryl group of the N-terminal cysteine of a prolipoprotein, the first step in the formation of mature lipoproteins. This is Phosphatidylglycerol--prolipoprotein diacylglyceryl transferase from Ralstonia pickettii (strain 12J).